The sequence spans 254 residues: Aquaporin TIP1-2 (254 aa).

Transmembrane regions (helical) follow at residues 24-44 (VAEF…GMAF) and 56-76 (AGLI…VSVG). The NPA 1 signature appears at 85 to 87 (NPA). 3 consecutive transmembrane segments (helical) span residues 103 to 123 (ALVY…LLKI), 144 to 164 (AVVL…ATAV), and 173 to 193 (VIAP…GGAF). Residues 199 to 201 (NPA) carry the NPA 2 motif. The chain crosses the membrane as a helical span at residues 220–240 (WVGPLAGAAIAALVYDIIFIG).

The protein belongs to the MIP/aquaporin (TC 1.A.8) family. TIP (TC 1.A.8.10) subfamily.

The protein resides in the vacuole membrane. In terms of biological role, aquaporins facilitate the transport of water and small neutral solutes across cell membranes. The chain is Aquaporin TIP1-2 (TIP1-2) from Zea mays (Maize).